The following is a 564-amino-acid chain: MEQRIKFPRSEKVYLSGKLFPEIRVGMRKVEQVPSTTFEGEKKVITPNPHVYIYDTSGPFSDPDIEIDLKKGLPRLREEWILNRGDVEQLPEISSEYGRMRRDDGSLDHLRFEHIALPYRAKAGRHITQMAYAKQGIVTPEMEYVAIRENMNCEELGIETHITPEFVRQEIAEGRAVLPANINHPEAEPMIIGRNFLVKINTNIGNSATTSSIDEEVEKAMWSCKWGGDTLMDLSTGENIHETREWIIRNCPVPVGTVPIYQALEKVNGKVEDLTWELYRDTLIEQCEQGVDYFTIHAGIRRHNVHLAEKRLCGIVSRGGSIMSKWCLVHDRESFLYEHFDDICDILAQYDVAVSLGDGLRPGSTHDANDEAQFAELDTMGELVVRAWEKNVQAFIEGPGHVPMHKIRENMERQIEKCHNAPFYTLGPLVTDIAPGYDHITSAIGAAQIGWLGTAMLCYVTPKEHLALPDKEDVRVGVITYKIAAHAADLAKGHPGAQVRDNALSKARYEFRWKDQFDLSLDPERAFSYFHAGRHTDGEYCTMCGPNFCAMRLSRDLKKTQKQK.

Residues Asn203, Met232, Tyr261, His297, 317–319 (SRG), 358–361 (DGLR), and Glu397 contribute to the substrate site. His401 lines the Zn(2+) pocket. Substrate is bound at residue Tyr424. Position 465 (His465) interacts with Zn(2+). The [4Fe-4S] cluster site is built by Cys541, Cys544, and Cys549.

It belongs to the ThiC family. It depends on [4Fe-4S] cluster as a cofactor.

The enzyme catalyses 5-amino-1-(5-phospho-beta-D-ribosyl)imidazole + S-adenosyl-L-methionine = 4-amino-2-methyl-5-(phosphooxymethyl)pyrimidine + CO + 5'-deoxyadenosine + formate + L-methionine + 3 H(+). It participates in cofactor biosynthesis; thiamine diphosphate biosynthesis. In terms of biological role, catalyzes the synthesis of the hydroxymethylpyrimidine phosphate (HMP-P) moiety of thiamine from aminoimidazole ribotide (AIR) in a radical S-adenosyl-L-methionine (SAM)-dependent reaction. This chain is Phosphomethylpyrimidine synthase, found in Bacteroides fragilis (strain ATCC 25285 / DSM 2151 / CCUG 4856 / JCM 11019 / LMG 10263 / NCTC 9343 / Onslow / VPI 2553 / EN-2).